Here is a 283-residue protein sequence, read N- to C-terminus: Homeobox-leucine zipper protein HAT2 (283 aa).

The interval 64–134 (VNCEEDTGVS…GETSRKKLRL (71 aa)) is disordered. Residues 73 to 84 (SSPNSTISSTIS) are compositionally biased toward low complexity. Residues 127-186 (TSRKKLRLSKDQSAFLEETFKEHNTLNPKQKLALAKKLNLTARQVEVWFQNRRARTKLKQ) constitute a DNA-binding region (homeobox). The segment at 194–215 (LKRCVEKLTEENRRLQKEAMEL) is leucine-zipper.

Belongs to the HD-ZIP homeobox family. Class II subfamily. Interacts with RBR1.

It localises to the nucleus. Probable transcription factor that plays a role in auxin-mediated morphogenesis. Negatively regulates lateral root elongation. This Arabidopsis thaliana (Mouse-ear cress) protein is Homeobox-leucine zipper protein HAT2 (HAT2).